The following is an 81-amino-acid chain: MAETSAPAKATAALKKGALVRVNRHAFSSSTEAAASDPSPPDYIFEGPGELLAVKEGYGQVRWRMPVPDVWLRIDQLEPFS.

This sequence belongs to the complex I NdhO subunit family. As to quaternary structure, NDH-1 can be composed of about 15 different subunits; different subcomplexes with different compositions have been identified which probably have different functions.

It localises to the cellular thylakoid membrane. The enzyme catalyses a plastoquinone + NADH + (n+1) H(+)(in) = a plastoquinol + NAD(+) + n H(+)(out). It catalyses the reaction a plastoquinone + NADPH + (n+1) H(+)(in) = a plastoquinol + NADP(+) + n H(+)(out). Its function is as follows. NDH-1 shuttles electrons from an unknown electron donor, via FMN and iron-sulfur (Fe-S) centers, to quinones in the respiratory and/or the photosynthetic chain. The immediate electron acceptor for the enzyme in this species is believed to be plastoquinone. Couples the redox reaction to proton translocation, and thus conserves the redox energy in a proton gradient. Cyanobacterial NDH-1 also plays a role in inorganic carbon-concentration. The chain is NAD(P)H-quinone oxidoreductase subunit O from Prochlorococcus marinus (strain MIT 9303).